A 188-amino-acid polypeptide reads, in one-letter code: Probable DNA-directed RNA polymerase subunit delta (188 aa).

One can recognise an HTH HARE-type domain in the interval 14-83 (LSMIEVARAI…GENKWGLRSW (70 aa)). The tract at residues 119–188 (EDAIDYSADD…EDEEDEDEEE (70 aa)) is disordered.

It belongs to the RpoE family. RNAP is composed of a core of 2 alpha, a beta and a beta' subunits. The core is associated with a delta subunit and one of several sigma factors.

Participates in both the initiation and recycling phases of transcription. In the presence of the delta subunit, RNAP displays an increased specificity of transcription, a decreased affinity for nucleic acids, and an increased efficiency of RNA synthesis because of enhanced recycling. The polypeptide is Probable DNA-directed RNA polymerase subunit delta (Streptococcus equi subsp. zooepidemicus (strain H70)).